Reading from the N-terminus, the 233-residue chain is Purine nucleoside phosphorylase DeoD-type (233 aa).

Position 4 (histidine 4) interacts with a purine D-ribonucleoside. Residues glycine 20, arginine 24, arginine 43, and 87–90 (RVGT) contribute to the phosphate site. Residues glutamate 162, 179-181 (EME), and 203-204 (SD) each bind a purine D-ribonucleoside. Catalysis depends on aspartate 204, which acts as the Proton donor.

The protein belongs to the PNP/UDP phosphorylase family. As to quaternary structure, homohexamer; trimer of homodimers.

The catalysed reaction is a purine D-ribonucleoside + phosphate = a purine nucleobase + alpha-D-ribose 1-phosphate. It carries out the reaction a purine 2'-deoxy-D-ribonucleoside + phosphate = a purine nucleobase + 2-deoxy-alpha-D-ribose 1-phosphate. Its function is as follows. Catalyzes the reversible phosphorolytic breakdown of the N-glycosidic bond in the beta-(deoxy)ribonucleoside molecules, with the formation of the corresponding free purine bases and pentose-1-phosphate. This is Purine nucleoside phosphorylase DeoD-type from Alkaliphilus metalliredigens (strain QYMF).